A 422-amino-acid polypeptide reads, in one-letter code: Dihydrolipoyllysine-residue succinyltransferase component of 2-oxoglutarate dehydrogenase complex (422 aa).

A Lipoyl-binding domain is found at 1 to 76 (MPEVKVPELA…EVGQAIAIIG (76 aa)). The residue at position 42 (Lys-42) is an N6-lipoyllysine. The interval 77 to 184 (EGSGNASKEN…APAKEEKKYN (108 aa)) is disordered. 2 stretches are compositionally biased toward polar residues: residues 80 to 94 (GNASKENSNDNTPQQ) and 116 to 130 (NQANDDNQQRINATP). Positions 127-163 (NATPSARRYARENGVNLAEVSPKTNDVVRKEDIDKKQ) constitute a Peripheral subunit-binding (PSBD) domain. Residues 152–163 (DVVRKEDIDKKQ) are compositionally biased toward basic and acidic residues. A compositionally biased stretch (low complexity) spans 164–176 (QAPASTQTTQQAP). Residues His-393 and Asp-397 contribute to the active site.

This sequence belongs to the 2-oxoacid dehydrogenase family. Forms a 24-polypeptide structural core with octahedral symmetry. Part of the 2-oxoglutarate dehydrogenase (OGDH) complex composed of E1 (2-oxoglutarate dehydrogenase), E2 (dihydrolipoamide succinyltransferase) and E3 (dihydrolipoamide dehydrogenase); the complex contains multiple copies of the three enzymatic components (E1, E2 and E3). It depends on (R)-lipoate as a cofactor.

The enzyme catalyses N(6)-[(R)-dihydrolipoyl]-L-lysyl-[protein] + succinyl-CoA = N(6)-[(R)-S(8)-succinyldihydrolipoyl]-L-lysyl-[protein] + CoA. The protein operates within amino-acid degradation; L-lysine degradation via saccharopine pathway; glutaryl-CoA from L-lysine: step 6/6. Functionally, E2 component of the 2-oxoglutarate dehydrogenase (OGDH) complex which catalyzes the second step in the conversion of 2-oxoglutarate to succinyl-CoA and CO(2). This Staphylococcus aureus (strain Mu50 / ATCC 700699) protein is Dihydrolipoyllysine-residue succinyltransferase component of 2-oxoglutarate dehydrogenase complex (odhB).